A 172-amino-acid polypeptide reads, in one-letter code: 3-hydroxydecanoyl-[acyl-carrier-protein] dehydratase (172 aa).

H70 is an active-site residue.

The protein belongs to the thioester dehydratase family. FabA subfamily. As to quaternary structure, homodimer.

Its subcellular location is the cytoplasm. It carries out the reaction a (3R)-hydroxyacyl-[ACP] = a (2E)-enoyl-[ACP] + H2O. The catalysed reaction is (3R)-hydroxydecanoyl-[ACP] = (2E)-decenoyl-[ACP] + H2O. The enzyme catalyses (2E)-decenoyl-[ACP] = (3Z)-decenoyl-[ACP]. It participates in lipid metabolism; fatty acid biosynthesis. Functionally, necessary for the introduction of cis unsaturation into fatty acids. Catalyzes the dehydration of (3R)-3-hydroxydecanoyl-ACP to E-(2)-decenoyl-ACP and then its isomerization to Z-(3)-decenoyl-ACP. Can catalyze the dehydratase reaction for beta-hydroxyacyl-ACPs with saturated chain lengths up to 16:0, being most active on intermediate chain length. This is 3-hydroxydecanoyl-[acyl-carrier-protein] dehydratase from Xylella fastidiosa (strain M23).